Consider the following 86-residue polypeptide: Weak neurotoxin 8 (86 aa).

Positions Met1–Thr21 are cleaved as a signal peptide. 5 disulfide bridges follow: Cys24–Cys45, Cys27–Cys32, Cys38–Cys63, Cys67–Cys78, and Cys79–Cys84.

The protein belongs to the three-finger toxin family. Ancestral subfamily. Orphan group II sub-subfamily. Expressed by the venom gland.

It is found in the secreted. Functionally, binds with low affinity to muscular (alpha-1-beta-1-delta-epsilon/CHRNA1-CHRNB1-CHRND-CHRNE) and very low affinity to neuronal (alpha-7/CHRNA7) nicotinic acetylcholine receptor (nAChR). The polypeptide is Weak neurotoxin 8 (Naja sputatrix (Malayan spitting cobra)).